We begin with the raw amino-acid sequence, 367 residues long: tRNA/tmRNA (uracil-C(5))-methyltransferase (367 aa).

Gln182, Tyr210, Asn215, Glu231, and Asp293 together coordinate S-adenosyl-L-methionine. Cys318 (nucleophile) is an active-site residue. The Proton acceptor role is filled by Glu352.

This sequence belongs to the class I-like SAM-binding methyltransferase superfamily. RNA M5U methyltransferase family. TrmA subfamily.

It carries out the reaction uridine(54) in tRNA + S-adenosyl-L-methionine = 5-methyluridine(54) in tRNA + S-adenosyl-L-homocysteine + H(+). The catalysed reaction is uridine(341) in tmRNA + S-adenosyl-L-methionine = 5-methyluridine(341) in tmRNA + S-adenosyl-L-homocysteine + H(+). Its function is as follows. Dual-specificity methyltransferase that catalyzes the formation of 5-methyluridine at position 54 (m5U54) in all tRNAs, and that of position 341 (m5U341) in tmRNA (transfer-mRNA). This Neisseria meningitidis serogroup C (strain 053442) protein is tRNA/tmRNA (uracil-C(5))-methyltransferase.